A 556-amino-acid polypeptide reads, in one-letter code: 2-succinyl-5-enolpyruvyl-6-hydroxy-3-cyclohexene-1-carboxylate synthase (556 aa).

This sequence belongs to the TPP enzyme family. MenD subfamily. Homodimer. Mg(2+) is required as a cofactor. The cofactor is Mn(2+). Requires thiamine diphosphate as cofactor.

It catalyses the reaction isochorismate + 2-oxoglutarate + H(+) = 5-enolpyruvoyl-6-hydroxy-2-succinyl-cyclohex-3-ene-1-carboxylate + CO2. The protein operates within quinol/quinone metabolism; 1,4-dihydroxy-2-naphthoate biosynthesis; 1,4-dihydroxy-2-naphthoate from chorismate: step 2/7. Its pathway is quinol/quinone metabolism; menaquinone biosynthesis. In terms of biological role, catalyzes the thiamine diphosphate-dependent decarboxylation of 2-oxoglutarate and the subsequent addition of the resulting succinic semialdehyde-thiamine pyrophosphate anion to isochorismate to yield 2-succinyl-5-enolpyruvyl-6-hydroxy-3-cyclohexene-1-carboxylate (SEPHCHC). The chain is 2-succinyl-5-enolpyruvyl-6-hydroxy-3-cyclohexene-1-carboxylate synthase from Shigella flexneri serotype 5b (strain 8401).